A 189-amino-acid polypeptide reads, in one-letter code: Protein Rex (189 aa).

The span at 1-16 (MPKTRRGPRRSQRKRP) shows a compositional bias: basic residues. Positions 1–26 (MPKTRRGPRRSQRKRPPTPWPTSQGL) are disordered. The short motif at 2 to 18 (PKTRRGPRRSQRKRPPT) is the Nuclear localization signal, and RNA-binding (RxRE) element. A homomultimerization region spans residues 56-70 (RPAYIVTPYWPPVQS). The residue at position 70 (serine 70) is a Phosphoserine; by host. Positions 82–93 (LSAQLYSSLSLG) match the Nuclear export signal motif. The interval 87-189 (YSSLSLGSPP…PPSPGPSCPR (103 aa)) is disordered. A compositionally biased stretch (pro residues) spans 115–125 (IQPPTFHPPSS). The tract at residues 123–131 (PSSRPYANT) is homomultimerization. Threonine 174 carries the phosphothreonine; by host modification. Serine 177 carries the phosphoserine; by host modification. Pro residues predominate over residues 178–189 (FPPPSPGPSCPR).

Belongs to the deltaretrovirus Rex protein family. In terms of assembly, homomultimer. Multimeric assembly is essential for activity and involves XPO1. Binds to human XPO1 and KPNB1. Interacts (via N-terminal nuclear localization signal) with human NPM1. Post-translationally, phosphorylated.

The protein resides in the host nucleus. It localises to the host nucleolus. Its subcellular location is the host cytoplasm. Rex escorts unspliced gag-pro-pol and singly spliced env mRNAs out of the nucleus of infected cells. These mRNAs carry a recognition sequence called Rex responsive element (RxRE or XRE) located at the 3' region of the long terminal repeat (LTR). This function is essential since most HTLV proteins are translated from unspliced or partially spliced pre-mRNAs that cannot exit the nucleus by the pathway used by fully processed cellular mRNAs. Rex itself is translated from a fully spliced mRNA that probably readily exits the nucleus. Rex's nuclear localization signal (NLS) binds directly to KPNB1/importin beta-1 without previous binding to KPNA1/importin alpha-1. KPNB1 binds to the GDP bound form of RAN (Ran-GDP) and targets Rex to the nucleus. In the nucleus, the conversion from Ran-GDP to Ran-GTP dissociates Rex from KPNB1 and allows Rex's binding to the RRE in viral pre-mRNAs. Rex multimerizes on the RRE via cooperative assembly. This multimerization is critical for its full biological activity, since it may shield the viral RNA from being spliced or down-regulated, and probably exposes Rex's nuclear export signal (NES) to the surface. Rex can then form a complex with XPO1/CRM1, RANBP3 and Ran-GTP, leading to nuclear export of the complex. Conversion from Ran-GTP to Ran-GDP mediates dissociation of the Rex/RRE/XPO1/RANBP3/RAN complex, so that Rex can return to the nucleus for a subsequent round of export. The polypeptide is Protein Rex (Homo sapiens (Human)).